Consider the following 35-residue polypeptide: Somatostatin (35 aa).

Cys24 and Cys35 are joined by a disulfide.

The protein belongs to the somatostatin family.

It localises to the secreted. Somatostatin inhibits the release of somatotropin. This Lampetra fluviatilis (European river lamprey) protein is Somatostatin (sst).